A 194-amino-acid chain; its full sequence is Cathelicidin-related peptide isoform 3 (194 aa).

An N-terminal signal peptide occupies residues 1-22; sequence MQGFFWKTWLVLAVCGTPASLA. Residues 23-164 constitute a propeptide that is removed on maturation; that stretch reads HRPLSYGEAL…DQPKRVKRFK (142 aa). Intrachain disulfides connect cysteine 79/cysteine 90 and cysteine 101/cysteine 118. The span at 125–145 shows a compositional bias: acidic residues; that stretch reads EEEEEEEEEEQKAEAENDEEV. The interval 125 to 156 is disordered; it reads EEEEEEEEEEQKAEAENDEEVEKEKGDEEKDQ. A compositionally biased stretch (basic and acidic residues) spans 146–156; sequence EKEKGDEEKDQ.

This sequence belongs to the cathelicidin family. In terms of tissue distribution, expressed by the venom gland.

It localises to the secreted. The protein resides in the target cell membrane. In terms of biological role, potent antimicrobial peptide against Gram-negative and Gram-positive bacteria. Adopts an amphipathic alpha helical conformation, that may allow to partition into the target membrane. Low hemolytic activities have been observed on mammalian cells. This chain is Cathelicidin-related peptide isoform 3, found in Crotalus durissus cascavella (Northeastern Brazilian rattlesnake).